A 418-amino-acid polypeptide reads, in one-letter code: Light-independent protochlorophyllide reductase subunit N (418 aa).

Residues Cys-17, Cys-42, and Cys-103 each coordinate [4Fe-4S] cluster.

The protein belongs to the BchN/ChlN family. As to quaternary structure, protochlorophyllide reductase is composed of three subunits; ChlL, ChlN and ChlB. Forms a heterotetramer of two ChlB and two ChlN subunits. It depends on [4Fe-4S] cluster as a cofactor.

The catalysed reaction is chlorophyllide a + oxidized 2[4Fe-4S]-[ferredoxin] + 2 ADP + 2 phosphate = protochlorophyllide a + reduced 2[4Fe-4S]-[ferredoxin] + 2 ATP + 2 H2O. It participates in porphyrin-containing compound metabolism; chlorophyll biosynthesis (light-independent). Component of the dark-operative protochlorophyllide reductase (DPOR) that uses Mg-ATP and reduced ferredoxin to reduce ring D of protochlorophyllide (Pchlide) to form chlorophyllide a (Chlide). This reaction is light-independent. The NB-protein (ChlN-ChlB) is the catalytic component of the complex. The protein is Light-independent protochlorophyllide reductase subunit N of Prochlorococcus marinus (strain MIT 9515).